Here is a 168-residue protein sequence, read N- to C-terminus: Gastrula zinc finger protein XlCGF42.1 (168 aa).

6 C2H2-type zinc fingers span residues 6–28 (YSCSDCGKCFTRRWNLSEHRKSH), 34–56 (FCCSVCGKGFSYHSQMKSHYRTH), 62–84 (CICSECGKSFTDHAGLRIHQKYH), 90–112 (FSCSECGKCFTRRSGLTAHLRIH), 118–140 (YTCTECGKCFTCRTDLARHLRIH), and 146–165 (FTCSQCEKSFASHSDLDRHH).

This sequence belongs to the krueppel C2H2-type zinc-finger protein family.

It is found in the nucleus. In terms of biological role, may be involved in transcriptional regulation. This Xenopus laevis (African clawed frog) protein is Gastrula zinc finger protein XlCGF42.1.